Here is a 198-residue protein sequence, read N- to C-terminus: Glycerol-3-phosphate acyltransferase (198 aa).

5 helical membrane-spanning segments follow: residues 5–25 (LILL…LWIG), 56–76 (SIVT…PFFF), 84–104 (FWLL…FAGF), 114–134 (AGVI…VFLV), and 158–178 (LFMG…FVIW).

The protein belongs to the PlsY family. Probably interacts with PlsX.

The protein localises to the cell membrane. The catalysed reaction is an acyl phosphate + sn-glycerol 3-phosphate = a 1-acyl-sn-glycero-3-phosphate + phosphate. It functions in the pathway lipid metabolism; phospholipid metabolism. Its function is as follows. Catalyzes the transfer of an acyl group from acyl-phosphate (acyl-PO(4)) to glycerol-3-phosphate (G3P) to form lysophosphatidic acid (LPA). This enzyme utilizes acyl-phosphate as fatty acyl donor, but not acyl-CoA or acyl-ACP. The protein is Glycerol-3-phosphate acyltransferase of Listeria monocytogenes serovar 1/2a (strain ATCC BAA-679 / EGD-e).